The primary structure comprises 307 residues: Solute carrier family 25 member 53 (307 aa).

Residues 1–23 (MGEQNHSPGKELQHRTRAEAPGK) form a disordered region. Over residues 8-22 (PGKELQHRTRAEAPG) the composition is skewed to basic and acidic residues. 3 Solcar repeats span residues 25–105 (SWHS…LLCF), 112–202 (HTLG…IQDG), and 210–302 (HWVP…HSRK). The next 6 membrane-spanning stretches (helical) occupy residues 31-51 (YALG…IYKV), 82-102 (YPPL…YDSL), 112-132 (HTLG…AVAL), 181-201 (VLAR…PIQD), 215-235 (LVSG…LIVL), and 269-290 (IYRG…TTAI).

The protein belongs to the mitochondrial carrier (TC 2.A.29) family.

It is found in the mitochondrion inner membrane. This Homo sapiens (Human) protein is Solute carrier family 25 member 53 (SLC25A53).